The primary structure comprises 100 residues: Small ribosomal subunit protein bS18 (100 aa).

Residues 1–23 (MTFIRKPAGQAKPQKYSTDAYGR) are disordered.

This sequence belongs to the bacterial ribosomal protein bS18 family. As to quaternary structure, part of the 30S ribosomal subunit. Forms a tight heterodimer with protein bS6.

Binds as a heterodimer with protein bS6 to the central domain of the 16S rRNA, where it helps stabilize the platform of the 30S subunit. This chain is Small ribosomal subunit protein bS18, found in Endomicrobium trichonymphae.